We begin with the raw amino-acid sequence, 344 residues long: Uroporphyrinogen decarboxylase (344 aa).

Substrate contacts are provided by residues 27–31 (RQAGR), phenylalanine 46, aspartate 77, tyrosine 153, threonine 208, and histidine 324.

Belongs to the uroporphyrinogen decarboxylase family. Homodimer.

It localises to the cytoplasm. It catalyses the reaction uroporphyrinogen III + 4 H(+) = coproporphyrinogen III + 4 CO2. The protein operates within porphyrin-containing compound metabolism; protoporphyrin-IX biosynthesis; coproporphyrinogen-III from 5-aminolevulinate: step 4/4. Functionally, catalyzes the decarboxylation of four acetate groups of uroporphyrinogen-III to yield coproporphyrinogen-III. This is Uroporphyrinogen decarboxylase from Bradyrhizobium diazoefficiens (strain JCM 10833 / BCRC 13528 / IAM 13628 / NBRC 14792 / USDA 110).